Consider the following 500-residue polypeptide: Probable cytosol aminopeptidase (500 aa).

Positions 264 and 269 each coordinate Mn(2+). Lysine 276 is an active-site residue. Residues aspartate 287, aspartate 346, and glutamate 348 each coordinate Mn(2+). Arginine 350 is an active-site residue.

It belongs to the peptidase M17 family. Mn(2+) serves as cofactor.

The protein localises to the cytoplasm. It carries out the reaction Release of an N-terminal amino acid, Xaa-|-Yaa-, in which Xaa is preferably Leu, but may be other amino acids including Pro although not Arg or Lys, and Yaa may be Pro. Amino acid amides and methyl esters are also readily hydrolyzed, but rates on arylamides are exceedingly low.. The catalysed reaction is Release of an N-terminal amino acid, preferentially leucine, but not glutamic or aspartic acids.. In terms of biological role, presumably involved in the processing and regular turnover of intracellular proteins. Catalyzes the removal of unsubstituted N-terminal amino acids from various peptides. This chain is Probable cytosol aminopeptidase, found in Chlamydia felis (strain Fe/C-56) (Chlamydophila felis).